The chain runs to 395 residues: Acetate kinase (395 aa).

Mg(2+) is bound at residue Asn8. Position 15 (Lys15) interacts with ATP. Arg89 lines the substrate pocket. Asp146 functions as the Proton donor/acceptor in the catalytic mechanism. Residues 206–210 (HLGNG), 281–283 (DLR), and 329–333 (GIGEN) contribute to the ATP site. Glu382 is a binding site for Mg(2+).

The protein belongs to the acetokinase family. As to quaternary structure, homodimer. The cofactor is Mg(2+). It depends on Mn(2+) as a cofactor.

It is found in the cytoplasm. The enzyme catalyses acetate + ATP = acetyl phosphate + ADP. Its pathway is metabolic intermediate biosynthesis; acetyl-CoA biosynthesis; acetyl-CoA from acetate: step 1/2. In terms of biological role, catalyzes the formation of acetyl phosphate from acetate and ATP. Can also catalyze the reverse reaction. The sequence is that of Acetate kinase from Shouchella clausii (strain KSM-K16) (Alkalihalobacillus clausii).